A 331-amino-acid polypeptide reads, in one-letter code: Peroxidase 69 (331 aa).

An N-terminal signal peptide occupies residues 1-23 (MGRGYNLLFVLVTFLVLVAAVTA). 4 disulfides stabilise this stretch: Cys46-Cys122, Cys79-Cys84, Cys128-Cys327, and Cys205-Cys237. The active-site Proton acceptor is His77. Positions 78, 81, 83, 85, and 87 each coordinate Ca(2+). Residue Asn93 is glycosylated (N-linked (GlcNAc...) asparagine). Substrate is bound at residue Pro168. His198 contributes to the heme b binding site. Thr199 provides a ligand contact to Ca(2+). N-linked (GlcNAc...) asparagine glycosylation occurs at Asn216. Ca(2+)-binding residues include Asp248, Ser251, and Asp256.

This sequence belongs to the peroxidase family. Classical plant (class III) peroxidase subfamily. The cofactor is heme b. It depends on Ca(2+) as a cofactor. Mainly expressed in roots and slightly in leaves.

The protein resides in the secreted. It catalyses the reaction 2 a phenolic donor + H2O2 = 2 a phenolic radical donor + 2 H2O. Removal of H(2)O(2), oxidation of toxic reductants, biosynthesis and degradation of lignin, suberization, auxin catabolism, response to environmental stresses such as wounding, pathogen attack and oxidative stress. These functions might be dependent on each isozyme/isoform in each plant tissue. This Arabidopsis thaliana (Mouse-ear cress) protein is Peroxidase 69 (PER69).